The chain runs to 196 residues: GTP cyclohydrolase 1 (196 aa).

Cys-86, His-89, and Cys-158 together coordinate Zn(2+).

Belongs to the GTP cyclohydrolase I family. In terms of assembly, homomer.

The catalysed reaction is GTP + H2O = 7,8-dihydroneopterin 3'-triphosphate + formate + H(+). Its pathway is cofactor biosynthesis; 7,8-dihydroneopterin triphosphate biosynthesis; 7,8-dihydroneopterin triphosphate from GTP: step 1/1. The chain is GTP cyclohydrolase 1 from Clostridium botulinum (strain Kyoto / Type A2).